Consider the following 944-residue polypeptide: 2-oxoglutarate dehydrogenase E1 component (944 aa).

The disordered stretch occupies residues Ser-918–Asn-944. Over residues Pro-925–Val-936 the composition is skewed to basic and acidic residues.

Belongs to the alpha-ketoglutarate dehydrogenase family. In terms of assembly, homodimer. Part of the 2-oxoglutarate dehydrogenase (OGDH) complex composed of E1 (2-oxoglutarate dehydrogenase), E2 (dihydrolipoamide succinyltransferase) and E3 (dihydrolipoamide dehydrogenase); the complex contains multiple copies of the three enzymatic components (E1, E2 and E3). It depends on thiamine diphosphate as a cofactor.

It catalyses the reaction N(6)-[(R)-lipoyl]-L-lysyl-[protein] + 2-oxoglutarate + H(+) = N(6)-[(R)-S(8)-succinyldihydrolipoyl]-L-lysyl-[protein] + CO2. In terms of biological role, E1 component of the 2-oxoglutarate dehydrogenase (OGDH) complex which catalyzes the decarboxylation of 2-oxoglutarate, the first step in the conversion of 2-oxoglutarate to succinyl-CoA and CO(2). The sequence is that of 2-oxoglutarate dehydrogenase E1 component from Bacillus pumilus (strain SAFR-032).